The following is a 271-amino-acid chain: Troponin T, fast skeletal muscle (271 aa).

Residues 1-21 show a composition bias toward acidic residues; that stretch reads MSDEEVEHVEEEYEEEEEAQE. Positions 1-74 are disordered; sequence MSDEEVEHVE…EKVDFDDIQK (74 aa). Position 2 is an N-acetylserine (S2). Residue S2 is modified to Phosphoserine. Composition is skewed to basic and acidic residues over residues 29 to 53 and 62 to 74; these read EVHE…EKPR and PEGE…DIQK. S90 is modified (phosphoserine). Positions 113–155 are enriched in basic and acidic residues; it reads RAERAEQQRIRAEKERERQNRLAEEKARREEEEAKRRAEDDLK. The disordered stretch occupies residues 113–192; sequence RAERAEQQRI…TAREMKKKVL (80 aa). 3 positions are modified to phosphoserine: S161, S168, and S169. The span at 183-192 shows a compositional bias: basic and acidic residues; that stretch reads TAREMKKKVL. Position 205 is a phosphoserine (S205). Y221 carries the phosphotyrosine modification. The tract at residues 249-271 is disordered; that stretch reads DQAQKHSKKAGTTPKGKVGGRWK.

The protein belongs to the troponin T family.

Troponin T is the tropomyosin-binding subunit of troponin, the thin filament regulatory complex which confers calcium-sensitivity to striated muscle actomyosin ATPase activity. The chain is Troponin T, fast skeletal muscle (TNNT3) from Sus scrofa (Pig).